Consider the following 838-residue polypeptide: GPMGIMGPRGFQGPAGEPGEPGQTGPAGARGPAGPPGKAGEDGHPGKPGRPGERGVVGPQGARGHNGIDGIKGQAGAPGVKGARGIPGERGRVGAPGPAGSRGSDGSVGPVGPAGPIGSAGPPGFPGAPGPKGEIGPVGNTGPAGPAGPRGKGAAGIPGVAGPRGIPGPVGASGATGARGIVGEPGPAGSKGEPGSAGPQGPPGPSGEEGKRGPNGESGSSGPTGPPGIRGSRGIPGADGRAGVMGPAGARGASGPTGVRGPSGDTGRPGEPGIMGPRGKEGPVGIPGIDGRVGPAGPAGEAGNIGFPGPKGPTGDPGKVGEKGHAGIAGNRGAPGPDGNNGAQGPPGPQGVQGGKGEQGPAGPPGFQGIPGPAGTTGEVGKPGERGITGEFGIPGPAGPRGERGPPGESGAAGPSGPIGSRGPSGPPGPDGNKGEPGVVGAPGTAGPAGSGGIPGERGAAGMPGGKGEKGETGIRGEVGTTGRDGARGAPGAVGAPGPAGATGDRGEAGAAGPAGPAGPRGTPGERGEVGPAGPNGFAGPAGAAGQPGAKGERGENGVVGPTGPIGSAGPAGPDGTPGPAGSRGDGGPPGVTGFPGAAGRTGPPGPSGITGPPGPPGAAGKRGDQGPVGRSGETGAGGPPGFTGEKGTAGPQGIIGAPGIIGIPGSRGIPGVSGSVGEPGPIGISGPPGARGPSGGVGNPGVNGAPGEAGRDGNPGNDGPPGRDGIPGHKGERGYAGNPGPVGAAGAPGPHGSVGPAGKHGNRGEPGPVGSVGPVGAIGPRNGIQGIPGIAGQHGDQGAPGSVGPAGPRGPAGPGGPPGKDGRTGHPGTVGPAGIRS.

The tract at residues 1–838 (GPMGIMGPRG…GTVGPAGIRS (838 aa)) is disordered. The span at 11–38 (FQGPAGEPGEPGQTGPAGARGPAGPPGK) shows a compositional bias: low complexity. Basic and acidic residues predominate over residues 39 to 53 (AGEDGHPGKPGRPGE). Composition is skewed to low complexity over residues 101–122 (SRGS…SAGP), 137–147 (PVGNTGPAGPA), 215–236 (NGES…RGIP), and 329–344 (AGNR…NGAQ). Residues 351–360 (GVQGGKGEQG) show a composition bias toward gly residues. Composition is skewed to low complexity over residues 407-424 (PGES…SRGP) and 436-446 (EPGVVGAPGTA). Positions 447–456 (GPAGSGGIPG) are enriched in gly residues. 3 stretches are compositionally biased toward low complexity: residues 479–523 (VGTT…PRGT), 530–550 (VGPA…QPGA), and 568–581 (SAGP…PGPA). Residues 582-591 (GSRGDGGPPG) are compositionally biased toward gly residues. A compositionally biased stretch (low complexity) spans 593 to 602 (TGFPGAAGRT). The segment covering 633 to 642 (GETGAGGPPG) has biased composition (gly residues). Residues 649 to 689 (TAGPQGIIGAPGIIGIPGSRGIPGVSGSVGEPGPIGISGPP) are compositionally biased toward low complexity. Residues 693-702 (GPSGGVGNPG) show a composition bias toward gly residues. Composition is skewed to low complexity over residues 703–718 (VNGA…NPGN), 736–758 (YAGN…VGPA), and 766–781 (EPGP…AIGP).

Belongs to the fibrillar collagen family. Trimers of one alpha 2(I) and two alpha 1(I) chains. Interacts (via C-terminus) with TMEM131 (via PapD-L domain); the interaction is direct and is involved in assembly and TRAPPIII ER-to-Golgi transport complex-dependent secretion of collagen. Prolines at the third position of the tripeptide repeating unit (G-X-Y) are hydroxylated in some or all of the chains. In terms of tissue distribution, forms the fibrils of tendon, ligaments and bones. In bones, the fibrils are mineralized with calcium hydroxyapatite.

The protein resides in the secreted. The protein localises to the extracellular space. It is found in the extracellular matrix. Type I collagen is a member of group I collagen (fibrillar forming collagen). The chain is Collagen alpha-2(I) chain from Cyclopes didactylus (Silky anteater).